An 89-amino-acid polypeptide reads, in one-letter code: Small ribosomal subunit protein uS15 (89 aa).

It belongs to the universal ribosomal protein uS15 family. In terms of assembly, part of the 30S ribosomal subunit. Forms a bridge to the 50S subunit in the 70S ribosome, contacting the 23S rRNA.

In terms of biological role, one of the primary rRNA binding proteins, it binds directly to 16S rRNA where it helps nucleate assembly of the platform of the 30S subunit by binding and bridging several RNA helices of the 16S rRNA. Forms an intersubunit bridge (bridge B4) with the 23S rRNA of the 50S subunit in the ribosome. In Shouchella clausii (strain KSM-K16) (Alkalihalobacillus clausii), this protein is Small ribosomal subunit protein uS15.